A 222-amino-acid polypeptide reads, in one-letter code: Large ribosomal subunit protein uL11c (222 aa).

Residues 1–20 (MASSSLSTLCSSTSSSLHPN) are disordered. The N-terminal 62 residues, 1 to 62 (MASSSLSTLC…TPRFLTVIAM (62 aa)), are a transit peptide targeting the chloroplast.

It belongs to the universal ribosomal protein uL11 family. As to quaternary structure, part of the ribosomal stalk of the 50S ribosomal subunit. Interacts with L10 and the large rRNA to form the base of the stalk. L10 forms an elongated spine to which L12 dimers bind in a sequential fashion forming a multimeric L10(L12)X complex.

It localises to the plastid. Its subcellular location is the chloroplast. In terms of biological role, forms part of the ribosomal stalk which helps the ribosome interact with GTP-bound translation factors. This is Large ribosomal subunit protein uL11c (RPL11) from Arabidopsis thaliana (Mouse-ear cress).